Here is a 147-residue protein sequence, read N- to C-terminus: Angiogenin (147 aa).

The N-terminal stretch at 1–24 (MVMGLGVLLLVFVLGLGLTPPTLA) is a signal peptide. Glutamine 25 carries the pyrrolidone carboxylic acid modification. Catalysis depends on histidine 37, which acts as the Proton acceptor. The tRNA site is built by arginine 45 and aspartate 46. 3 disulfides stabilise this stretch: cysteine 50–cysteine 105, cysteine 63–cysteine 116, and cysteine 81–cysteine 131. Positions 55–59 (RRRGL) match the Nucleolar localization signal motif. 2 residues coordinate tRNA: cysteine 105 and valine 127. Histidine 138 (proton donor) is an active-site residue.

Belongs to the pancreatic ribonuclease family. In terms of assembly, homodimer. Interacts with RNH1; inhibiting ANG ribonuclease activity. Interacts with PCNA.

It is found in the secreted. Its subcellular location is the nucleus. The protein resides in the nucleolus. It localises to the cytoplasm. The protein localises to the stress granule. Its activity is regulated as follows. Has weak tRNA ribonuclease activity by itself due to partial autoinhibition by its C-terminus, which folds into a short alpha-helix that partially occludes the substrate-binding site. In absence of stress, the ribonuclease activity is inhibited by RNH1 in the cytoplasm. In response to stress, dissociates from RNH1 in the cytoplasm and associates with cytoplasmic ribosomes with vacant A-sites: ribosomes directly activate the tRNA ribonuclease activity of ANG by refolding the C-terminal alpha-helix. In response to stress, the angiogenic activity of ANG is inhibited by RNH1 in the nucleus. Its function is as follows. Secreted ribonuclease that can either promote or restrict cell proliferation of target cells, depending on the context. Endocytosed in target cells via its receptor PLXNB2 and translocates to the cytoplasm or nucleus. Under stress conditions, localizes to the cytoplasm and promotes the assembly of stress granules (SGs): specifically cleaves a subset of tRNAs within anticodon loops to produce tRNA-derived stress-induced fragments (tiRNAs), resulting in translation repression and inhibition of cell proliferation. tiRNas also prevent formation of apoptosome, thereby promoting cell survival. Preferentially cleaves RNAs between a pyrimidine and an adenosine residue, suggesting that it cleaves the anticodon loop of tRNA(Ala) (32-UUAGCAU-38) after positions 33 and 36. Cleaves a subset of tRNAs, including tRNA(Ala), tRNA(Glu), tRNA(Gly), tRNA(Lys), tRNA(Val), tRNA(His), tRNA(Asp) and tRNA(Sec). Under growth conditions and in differentiated cells, translocates to the nucleus and stimulates ribosomal RNA (rRNA) transcription, including that containing the initiation site sequences of 45S rRNA, thereby promoting cell growth and proliferation. Angiogenin induces vascularization of normal and malignant tissues via its ability to promote rRNA transcription. Involved in hematopoietic stem and progenitor cell (HSPC) growth and survival by promoting rRNA transcription in growth conditions and inhibiting translation in response to stress, respectively. Mediates the crosstalk between myeloid and intestinal epithelial cells to protect the intestinal epithelial barrier integrity: secreted by myeloid cells and promotes intestinal epithelial cells proliferation and survival. Also mediates osteoclast-endothelial cell crosstalk in growing bone: produced by osteoclasts and protects the neighboring vascular cells against senescence by promoting rRNA transcription. This Pan troglodytes (Chimpanzee) protein is Angiogenin (ANG).